Consider the following 74-residue polypeptide: ARGAGLLSQDWSAVEDLLAQMSLPEADAQREAEVVSVATGGRLNLESVDPPNNIPLRERKAGCKNFYWKGFTSC.

A propeptide spanning residues 1–46 is cleaved from the precursor; the sequence is ARGAGLLSQDWSAVEDLLAQMSLPEADAQREAEVVSVATGGRLNLE. Residues C63 and C74 are joined by a disulfide bond.

Belongs to the somatostatin family.

The protein localises to the secreted. Its function is as follows. Somatostatin inhibits the release of somatotropin. This is Somatostatin-2 (sst2) from Myoxocephalus scorpius (Shorthorn sculpin).